Here is a 1362-residue protein sequence, read N- to C-terminus: DNA-directed RNA polymerase subunit beta (1362 aa).

This sequence belongs to the RNA polymerase beta chain family. In terms of assembly, the RNAP catalytic core consists of 2 alpha, 1 beta, 1 beta' and 1 omega subunit. When a sigma factor is associated with the core the holoenzyme is formed, which can initiate transcription.

It carries out the reaction RNA(n) + a ribonucleoside 5'-triphosphate = RNA(n+1) + diphosphate. Functionally, DNA-dependent RNA polymerase catalyzes the transcription of DNA into RNA using the four ribonucleoside triphosphates as substrates. The chain is DNA-directed RNA polymerase subunit beta from Acinetobacter baumannii (strain AB307-0294).